Reading from the N-terminus, the 78-residue chain is Large ribosomal subunit protein bL28 (78 aa).

Belongs to the bacterial ribosomal protein bL28 family.

The chain is Large ribosomal subunit protein bL28 from Rippkaea orientalis (strain PCC 8801 / RF-1) (Cyanothece sp. (strain PCC 8801)).